A 629-amino-acid chain; its full sequence is Rho GTPase-activating protein conundrum (629 aa).

Residues 185–294 (PPKSGTYADI…CRDSSSLDSC (110 aa)) form a required for interaction with Moe region. A disordered region spans residues 237 to 261 (SIGRSKESRSENDARSQKKKSSEVL). The segment covering 240–258 (RSKESRSENDARSQKKKSS) has biased composition (basic and acidic residues). Positions 359 to 565 (VSINALIRRD…ILILRGEKLF (207 aa)) constitute a Rho-GAP domain.

As to quaternary structure, interacts with Moe (via FERM domain).

It localises to the cytoplasm. The protein resides in the cell membrane. Its subcellular location is the cell cortex. It is found in the cell junction. Functionally, GTPase-activating protein (GAP) for Rho1; functions with the ERM protein Moe to regulate Rho1 and control proliferation in the developing epithelium. Recruited by Moe to the cell cortex where it negatively regulates Rho1 activity. Can also promote cell proliferation independently of its GAP activity, perhaps by acting with Arf6 to positively regulate Rac1. This chain is Rho GTPase-activating protein conundrum, found in Drosophila melanogaster (Fruit fly).